A 478-amino-acid chain; its full sequence is Putative UDP-glucose flavonoid 3-O-glucosyltransferase 3 (478 aa).

The protein belongs to the UDP-glycosyltransferase family.

The protein is Putative UDP-glucose flavonoid 3-O-glucosyltransferase 3 of Fragaria ananassa (Strawberry).